The chain runs to 496 residues: Costunolide synthase (496 aa).

A helical; Signal-anchor for type II membrane protein transmembrane segment spans residues 4–24 (FTIFSLVVASLVFFACWALVA). N-linked (GlcNAc...) asparagine glycans are attached at residues Asn26, Asn168, Asn280, and Asn412. Cys434 lines the heme pocket.

Belongs to the cytochrome P450 family. It depends on heme as a cofactor. In terms of tissue distribution, expressed in floral glandular trichomes.

It localises to the membrane. It catalyses the reaction germacra-1(10),4,11(13)-trien-12-oate + reduced [NADPH--hemoprotein reductase] + O2 = (+)-costunolide + oxidized [NADPH--hemoprotein reductase] + 2 H2O. It functions in the pathway secondary metabolite biosynthesis; terpenoid biosynthesis. Involved in the biosynthesis of germacrene-derived sesquiterpene lactones. Component of the parthenolide biosynthetic pathway; parthenolide and conjugates are promising anti-cancer drugs highly active against colon cancer cells. Hydroxylates germacrene A acid to 6-alpha-hydroxy-germacrene A acid, a precursor of sesquiterpene lactones that spontaneously undergoes a lactonization which yields costunolide. This chain is Costunolide synthase, found in Tanacetum parthenium (Feverfew).